Here is a 94-residue protein sequence, read N- to C-terminus: ATP synthase subunit c (94 aa).

2 helical membrane passes run 15–35 and 61–81; these read VSVGIILAAAGLGSALGWGLI and GGLMEAFPMIVLGMSMWFIFA.

It belongs to the ATPase C chain family. In terms of assembly, F-type ATPases have 2 components, F(1) - the catalytic core - and F(0) - the membrane proton channel. F(1) has five subunits: alpha(3), beta(3), gamma(1), delta(1), epsilon(1). F(0) has three main subunits: a(1), b(2) and c(10-14). The alpha and beta chains form an alternating ring which encloses part of the gamma chain. F(1) is attached to F(0) by a central stalk formed by the gamma and epsilon chains, while a peripheral stalk is formed by the delta and b chains.

The protein localises to the cell inner membrane. Its function is as follows. F(1)F(0) ATP synthase produces ATP from ADP in the presence of a proton or sodium gradient. F-type ATPases consist of two structural domains, F(1) containing the extramembraneous catalytic core and F(0) containing the membrane proton channel, linked together by a central stalk and a peripheral stalk. During catalysis, ATP synthesis in the catalytic domain of F(1) is coupled via a rotary mechanism of the central stalk subunits to proton translocation. Functionally, key component of the F(0) channel; it plays a direct role in translocation across the membrane. A homomeric c-ring of between 10-14 subunits forms the central stalk rotor element with the F(1) delta and epsilon subunits. The polypeptide is ATP synthase subunit c (Nitrosococcus oceani (strain ATCC 19707 / BCRC 17464 / JCM 30415 / NCIMB 11848 / C-107)).